A 1486-amino-acid chain; its full sequence is Chromosome partition protein MukB (1486 aa).

34 to 41 (GGNGAGKS) provides a ligand contact to ATP. Coiled coils occupy residues 326–418 (LEAD…QYNQ), 444–480 (LETFQAKELEATEKMLSLEQKMSMAQTAHSQFEQAYQ), and 509–603 (RHLA…RAPV). The flexible hinge stretch occupies residues 666–783 (PGGSEDQRLN…EVPLFGRAAR (118 aa)). 3 coiled-coil regions span residues 835-923 (EAEI…AKLE), 977-1115 (EMLS…TAKA), and 1209-1265 (VEAI…LQSV).

It belongs to the SMC family. MukB subfamily. Homodimerization via its hinge domain. Binds to DNA via its C-terminal region. Interacts, and probably forms a ternary complex, with MukE and MukF via its C-terminal region. The complex formation is stimulated by calcium or magnesium. Interacts with tubulin-related protein FtsZ.

It localises to the cytoplasm. Its subcellular location is the nucleoid. Functionally, plays a central role in chromosome condensation, segregation and cell cycle progression. Functions as a homodimer, which is essential for chromosome partition. Involved in negative DNA supercoiling in vivo, and by this means organize and compact chromosomes. May achieve or facilitate chromosome segregation by condensation DNA from both sides of a centrally located replisome during cell division. The polypeptide is Chromosome partition protein MukB (Escherichia coli O7:K1 (strain IAI39 / ExPEC)).